A 312-amino-acid chain; its full sequence is Glyoxylate/hydroxypyruvate reductase A (312 aa).

Arg-227 is an active-site residue. Catalysis depends on His-275, which acts as the Proton donor.

The protein belongs to the D-isomer specific 2-hydroxyacid dehydrogenase family. GhrA subfamily.

It localises to the cytoplasm. The catalysed reaction is glycolate + NADP(+) = glyoxylate + NADPH + H(+). It carries out the reaction (R)-glycerate + NAD(+) = 3-hydroxypyruvate + NADH + H(+). It catalyses the reaction (R)-glycerate + NADP(+) = 3-hydroxypyruvate + NADPH + H(+). In terms of biological role, catalyzes the NADPH-dependent reduction of glyoxylate and hydroxypyruvate into glycolate and glycerate, respectively. In Salmonella dublin (strain CT_02021853), this protein is Glyoxylate/hydroxypyruvate reductase A.